A 194-amino-acid chain; its full sequence is dCTP deaminase (194 aa).

Residues R110–R115, D128, V136–E138, Y171, K178, and Q182 contribute to the dCTP site. The active-site Proton donor/acceptor is E138. Residues R169 to N194 are disordered. Over residues P170–D181 the composition is skewed to basic and acidic residues. Residues Q182–N194 show a composition bias toward polar residues.

It belongs to the dCTP deaminase family. As to quaternary structure, homotrimer.

It carries out the reaction dCTP + H2O + H(+) = dUTP + NH4(+). Its pathway is pyrimidine metabolism; dUMP biosynthesis; dUMP from dCTP (dUTP route): step 1/2. Functionally, catalyzes the deamination of dCTP to dUTP. This chain is dCTP deaminase, found in Marinomonas sp. (strain MWYL1).